An 876-amino-acid polypeptide reads, in one-letter code: Valine--tRNA ligase (876 aa).

The 'HIGH' region motif lies at 44 to 54 (PNVTGKLHLGH). The 'KMSKS' region motif lies at 520–524 (KMSKS). Residue Lys523 coordinates ATP. A coiled-coil region spans residues 806 to 876 (EGLIDMDKEI…VKLRINQLKA (71 aa)).

Belongs to the class-I aminoacyl-tRNA synthetase family. ValS type 1 subfamily. Monomer.

It is found in the cytoplasm. It catalyses the reaction tRNA(Val) + L-valine + ATP = L-valyl-tRNA(Val) + AMP + diphosphate. Functionally, catalyzes the attachment of valine to tRNA(Val). As ValRS can inadvertently accommodate and process structurally similar amino acids such as threonine, to avoid such errors, it has a 'posttransfer' editing activity that hydrolyzes mischarged Thr-tRNA(Val) in a tRNA-dependent manner. The sequence is that of Valine--tRNA ligase from Staphylococcus saprophyticus subsp. saprophyticus (strain ATCC 15305 / DSM 20229 / NCIMB 8711 / NCTC 7292 / S-41).